The chain runs to 899 residues: Tuberous sclerosis 1 protein homolog (899 aa).

Coiled-coil stretches lie at residues 540-706 (LSST…CVNI) and 737-847 (SDEQ…ELKN). A disordered region spans residues 874–899 (NDSLHPKVGPPRRQSTDTSRSTFRQY). A compositionally biased stretch (polar residues) spans 889–899 (TDTSRSTFRQY).

As to quaternary structure, interacts with tsc2.

The protein resides in the cytoplasm. In terms of biological role, together with tsc2, required for uptake of various amino acids from the environment and for proper conjugation. Involved in induction of gene expression of permeases and genes required for meiosis upon nitrogen starvation. May act as a GTPase-activating protein (GAP) for the small GTPase rhb1. The protein is Tuberous sclerosis 1 protein homolog (tsc1) of Schizosaccharomyces pombe (strain 972 / ATCC 24843) (Fission yeast).